Reading from the N-terminus, the 429-residue chain is Adenylosuccinate synthetase (429 aa).

Residues 12 to 18 (GDEGKGK) and 40 to 42 (GHT) each bind GTP. The active-site Proton acceptor is the Asp-13. Positions 13 and 40 each coordinate Mg(2+). IMP contacts are provided by residues 13-16 (DEGK), 38-41 (NAGH), Thr-129, Arg-143, Gln-223, Thr-238, and Arg-302. His-41 acts as the Proton donor in catalysis. 298 to 304 (VVTGRKR) provides a ligand contact to substrate. Residues Arg-304, 330-332 (KLD), and 412-414 (STS) each bind GTP.

Belongs to the adenylosuccinate synthetase family. In terms of assembly, homodimer. It depends on Mg(2+) as a cofactor.

It localises to the cytoplasm. The enzyme catalyses IMP + L-aspartate + GTP = N(6)-(1,2-dicarboxyethyl)-AMP + GDP + phosphate + 2 H(+). The protein operates within purine metabolism; AMP biosynthesis via de novo pathway; AMP from IMP: step 1/2. Functionally, plays an important role in the de novo pathway of purine nucleotide biosynthesis. Catalyzes the first committed step in the biosynthesis of AMP from IMP. The chain is Adenylosuccinate synthetase from Bartonella henselae (strain ATCC 49882 / DSM 28221 / CCUG 30454 / Houston 1) (Rochalimaea henselae).